A 617-amino-acid chain; its full sequence is Protein 4.1 (617 aa).

Positions 1-282 (MHCKVSLLDD…EHHTFFRLTS (282 aa)) constitute an FERM domain. Y13 carries the post-translational modification Phosphotyrosine. T169 carries the phosphothreonine modification. The tract at residues 308 to 401 (TRQASALIDR…AEPEPSEAWK (94 aa)) is disordered. Phosphoserine is present on residues S312, S331, and S333. Positions 348–361 (RPTSAPAIAPSPAA) are enriched in low complexity. Residues 387-396 (APPEDAEPEP) are compositionally biased toward acidic residues. The segment at 401-466 (KKKRERLDGE…WDKRLSTHSP (66 aa)) is spectrin--actin-binding. Phosphotyrosine; by EGFR is present on Y413. Residues S417, S427, S437, and S462 each carry the phosphoserine modification. At S465 the chain carries Phosphoserine; by CDK1. The tract at residues 467-617 (FRTLNINGQI…VHQETEISEE (151 aa)) is C-terminal (CTD). A phosphothreonine mark is found at T489 and T612.

As to quaternary structure, binds with a high affinity to glycophorin and with lower affinity to band III protein. Associates with the nuclear mitotic apparatus. Binds calmodulin, CPAP and DLG1. Also found to associate with contractile apparatus and tight junctions. Interacts with NUMA1; this interaction is negatively regulated by CDK1 during metaphase and promotes anaphase-specific localization of NUMA1 in symmetrically dividing cells. Interacts with ATP2B1; regulates small intestinal calcium absorption through regulation of membrane expression of ATP2B1. Post-translationally, phosphorylated at multiple sites by different protein kinases and each phosphorylation event selectively modulates the protein's functions. In terms of processing, phosphorylation on Tyr-413 reduces the ability of 4.1 to promote the assembly of the spectrin/actin/4.1 ternary complex.

It localises to the nucleus. The protein localises to the cytoplasm. It is found in the cytoskeleton. Its subcellular location is the cell cortex. Its function is as follows. Protein 4.1 is a major structural element of the erythrocyte membrane skeleton. It plays a key role in regulating membrane physical properties of mechanical stability and deformability by stabilizing spectrin-actin interaction. Recruits DLG1 to membranes. Required for dynein-dynactin complex and NUMA1 recruitment at the mitotic cell cortex during anaphase. This Bos taurus (Bovine) protein is Protein 4.1.